A 288-amino-acid chain; its full sequence is Polyamine aminopropyltransferase (288 aa).

Residues 9-238 (ETLHDQFGQY…GIMTFAWATD (230 aa)) form the PABS domain. Gln-33 is an S-methyl-5'-thioadenosine binding site. Residues His-64 and Asp-88 each coordinate spermidine. Residues Glu-108 and 140 to 141 (DG) contribute to the S-methyl-5'-thioadenosine site. Residue Asp-158 is the Proton acceptor of the active site. 158–161 (DCTD) provides a ligand contact to spermidine. Position 165 (Pro-165) interacts with S-methyl-5'-thioadenosine.

It belongs to the spermidine/spermine synthase family. As to quaternary structure, homodimer or homotetramer.

Its subcellular location is the cytoplasm. It carries out the reaction S-adenosyl 3-(methylsulfanyl)propylamine + putrescine = S-methyl-5'-thioadenosine + spermidine + H(+). It participates in amine and polyamine biosynthesis; spermidine biosynthesis; spermidine from putrescine: step 1/1. Functionally, catalyzes the irreversible transfer of a propylamine group from the amino donor S-adenosylmethioninamine (decarboxy-AdoMet) to putrescine (1,4-diaminobutane) to yield spermidine. This Shigella sonnei (strain Ss046) protein is Polyamine aminopropyltransferase.